The sequence spans 85 residues: MSNYEILDKIRERIEKEFIMARQSRIDVVLMPMNEYSGYFYTIYTVEYTDVSNEFSSVMLTQGEYIILKNSVLVKIGDKVKQLEL.

This is an uncharacterized protein from Acidianus filamentous virus 2 (isolate Italy/Pozzuoli) (AFV-2).